The chain runs to 208 residues: uncharacterized protein (208 aa).

A signal peptide spans 1–16 (MTRVALLTTGRELSQA). Disordered regions lie at residues 1-95 (MTRV…VRGQ) and 145-176 (RVTK…SAAD). Residues 16 to 25 (AAPPARARTP) are compositionally biased toward low complexity. Positions 32–43 (RGERPDDGGHAP) are enriched in basic and acidic residues. The span at 44 to 54 (HRDRRVNQRRR) shows a compositional bias: basic residues. The segment covering 55-95 (QVGDRRAQRGVDEHPWRRPDERPNDHLPQRNSERPEGVRGQ) has biased composition (basic and acidic residues). Polar residues-rich tracts occupy residues 148–158 (KVSSSGPNSTP) and 167–176 (GTNNAPSAAD).

This is an uncharacterized protein from Mycobacterium tuberculosis (strain CDC 1551 / Oshkosh).